The sequence spans 391 residues: Ferrochelatase (391 aa).

2 residues coordinate Fe cation: His196 and Glu281.

It belongs to the ferrochelatase family.

The protein resides in the cytoplasm. The enzyme catalyses heme b + 2 H(+) = protoporphyrin IX + Fe(2+). Its pathway is porphyrin-containing compound metabolism; protoheme biosynthesis; protoheme from protoporphyrin-IX: step 1/1. Its function is as follows. Catalyzes the ferrous insertion into protoporphyrin IX. This is Ferrochelatase from Prochlorococcus marinus (strain NATL2A).